Here is a 379-residue protein sequence, read N- to C-terminus: Probable malonyl-CoA-acyl carrier protein transacylase, mitochondrial (379 aa).

The N-terminal 23 residues, 1 to 23 (MLAARRLLRSPRITGALSWSRWS), are a transit peptide targeting the mitochondrion. Residues S158 and H275 contribute to the active site.

It belongs to the type II malonyltransferase family.

It is found in the mitochondrion. The catalysed reaction is holo-[ACP] + malonyl-CoA = malonyl-[ACP] + CoA. The protein operates within lipid metabolism; fatty acid biosynthesis. Functionally, catalyzes the transfer of a malonyl moiety from malonyl-CoA to the free thiol group of the phosphopantetheine arm of the ACP protein. This suggests the existence of the biosynthesis of fatty acids in mitochondria. This chain is Probable malonyl-CoA-acyl carrier protein transacylase, mitochondrial, found in Drosophila melanogaster (Fruit fly).